Reading from the N-terminus, the 32-residue chain is Photosystem I reaction center subunit XII (32 aa).

A helical membrane pass occupies residues 10-27; the sequence is VVALVSAFVTGILALRLG.

The protein belongs to the PsaM family.

The protein localises to the plastid. It localises to the chloroplast thylakoid membrane. This Staurastrum punctulatum (Green alga) protein is Photosystem I reaction center subunit XII.